A 362-amino-acid polypeptide reads, in one-letter code: 45 kDa calcium-binding protein (362 aa).

An N-terminal signal peptide occupies residues 1–36 (MVWPWVAMASRWGPLIGLAPCCLWLLGAVLLMDASA). Asn-40 carries an N-linked (GlcNAc...) asparagine glycan. 2 EF-hand domains span residues 98–133 (RSRR…KTAE) and 137–172 (EAME…SKGH). Ser-99 is subject to Phosphoserine. Positions 111, 113, 115, 117, 122, 150, 152, 154, 156, and 161 each coordinate Ca(2+). The residue at position 193 (Thr-193) is a Phosphothreonine. EF-hand domains follow at residues 197-232 (LENL…HSRG), 233-268 (MLRF…TVEN), 278-313 (WVKD…MNEY), and 314-349 (NALN…FTGS). Position 213 (Asp-213) interacts with Ca(2+). The residue at position 217 (Thr-217) is a Phosphothreonine. The Ca(2+) site is built by Glu-220, Asp-246, Asp-248, Asp-250, Gln-252, and Glu-257. At Thr-265 the chain carries Phosphothreonine. Residues Asp-291, Asn-293, and Asp-295 each contribute to the Ca(2+) site. A Phosphothreonine modification is found at Thr-299. The Ca(2+) site is built by Glu-302, Asp-327, Asn-329, Asn-331, His-333, and Glu-338. A necessary for intracellular retention in Golgi apparatus lumen region spans residues 309 to 362 (PMNEYNALNEAKQMIAVADENQNHHLEPEEVLKYSEFFTGSKLVDYARSVHEEF).

Belongs to the CREC family. As to quaternary structure, isoform 5 interacts with STXBP1; the interaction is enhanced in presence of calcium. Isoform 5 interacts with STX3. In terms of tissue distribution, ubiquitous. Isoform 5 is expressed in pancreas.

The protein resides in the golgi apparatus lumen. It is found in the cytoplasm. Its subcellular location is the cell membrane. It localises to the cell projection. The protein localises to the bleb. In terms of biological role, may regulate calcium-dependent activities in the endoplasmic reticulum lumen or post-ER compartment. Functionally, isoform 5 may be involved in the exocytosis of zymogens by pancreatic acini. The chain is 45 kDa calcium-binding protein (SDF4) from Homo sapiens (Human).